A 256-amino-acid polypeptide reads, in one-letter code: Chloroplastic group IIB intron splicing facilitator CRS2, chloroplastic (256 aa).

A chloroplast-targeting transit peptide spans 1–45; it reads MSLLAAAIPSTSSHFSAPFLPSFRMPRKSLTAPLHRIRRPRPFTV. Y74 contributes to the tRNA binding site. The active-site Proton acceptor is the H79. TRNA contacts are provided by Y124, N126, and N172.

Belongs to the PTH family. CRS2 subfamily. Interacts with CAF1 and CAF2. Part of large ribonucleo-protein complexes that include group IIB introns and either CAF1 or CAF2.

The protein localises to the plastid. The protein resides in the chloroplast stroma. In terms of biological role, required for the splicing of group IIB introns in chloroplasts. Forms complexes with either CAF1 or CAF2 which, in turn, interact with RNA and confer intron specificity of the splicing particles. Has no peptidyl-tRNA hydrolase activity. This Zea mays (Maize) protein is Chloroplastic group IIB intron splicing facilitator CRS2, chloroplastic (CRS2).